Consider the following 163-residue polypeptide: Transcription elongation factor GreB (163 aa).

The stretch at 54-76 (GKRRMREIDRRIRFLTKRLEAAV) forms a coiled coil.

This sequence belongs to the GreA/GreB family. GreB subfamily.

Necessary for efficient RNA polymerase transcription elongation past template-encoded arresting sites. The arresting sites in DNA have the property of trapping a certain fraction of elongating RNA polymerases that pass through, resulting in locked ternary complexes. Cleavage of the nascent transcript by cleavage factors such as GreA or GreB allows the resumption of elongation from the new 3'terminus. GreB releases sequences of up to 9 nucleotides in length. The chain is Transcription elongation factor GreB from Neisseria meningitidis serogroup A / serotype 4A (strain DSM 15465 / Z2491).